Here is a 122-residue protein sequence, read N- to C-terminus: Ribosomal protein eL22-like (122 aa).

Residues Ser112, Ser118, and Ser120 each carry the phosphoserine modification.

The protein belongs to the eukaryotic ribosomal protein eL22 family.

The chain is Ribosomal protein eL22-like (RPL22L1) from Homo sapiens (Human).